The following is a 299-amino-acid chain: 4-hydroxy-tetrahydrodipicolinate synthase (299 aa).

Pyruvate is bound at residue threonine 44. Tyrosine 133 functions as the Proton donor/acceptor in the catalytic mechanism. The active-site Schiff-base intermediate with substrate is lysine 162. Isoleucine 204 provides a ligand contact to pyruvate.

This sequence belongs to the DapA family. In terms of assembly, homotetramer; dimer of dimers.

It is found in the cytoplasm. The enzyme catalyses L-aspartate 4-semialdehyde + pyruvate = (2S,4S)-4-hydroxy-2,3,4,5-tetrahydrodipicolinate + H2O + H(+). It functions in the pathway amino-acid biosynthesis; L-lysine biosynthesis via DAP pathway; (S)-tetrahydrodipicolinate from L-aspartate: step 3/4. Catalyzes the condensation of (S)-aspartate-beta-semialdehyde [(S)-ASA] and pyruvate to 4-hydroxy-tetrahydrodipicolinate (HTPA). The polypeptide is 4-hydroxy-tetrahydrodipicolinate synthase (Thermus thermophilus (strain ATCC 27634 / DSM 579 / HB8)).